The primary structure comprises 380 residues: 4-hydroxy-3-methylbut-2-en-1-yl diphosphate synthase (flavodoxin) (380 aa).

[4Fe-4S] cluster contacts are provided by C280, C283, C315, and E322.

It belongs to the IspG family. Requires [4Fe-4S] cluster as cofactor.

The catalysed reaction is (2E)-4-hydroxy-3-methylbut-2-enyl diphosphate + oxidized [flavodoxin] + H2O + 2 H(+) = 2-C-methyl-D-erythritol 2,4-cyclic diphosphate + reduced [flavodoxin]. The protein operates within isoprenoid biosynthesis; isopentenyl diphosphate biosynthesis via DXP pathway; isopentenyl diphosphate from 1-deoxy-D-xylulose 5-phosphate: step 5/6. Functionally, converts 2C-methyl-D-erythritol 2,4-cyclodiphosphate (ME-2,4cPP) into 1-hydroxy-2-methyl-2-(E)-butenyl 4-diphosphate. In Cutibacterium acnes (strain DSM 16379 / KPA171202) (Propionibacterium acnes), this protein is 4-hydroxy-3-methylbut-2-en-1-yl diphosphate synthase (flavodoxin).